The primary structure comprises 294 residues: Antiviral protein alpha (294 aa).

A signal peptide spans 1–24 (MKMMVVVVVMMLSWLILKPPSTWA). 2 disulfide bridges follow: Cys58–Cys282 and Cys108–Cys130. Glu199 is a catalytic residue. The propeptide occupies 286 to 294 (YQSAMFPHL).

The protein belongs to the ribosome-inactivating protein family. Type 1 RIP subfamily. Monomer.

The protein localises to the secreted. It localises to the cell wall. The catalysed reaction is Endohydrolysis of the N-glycosidic bond at one specific adenosine on the 28S rRNA.. Functionally, inhibits viral infection of plants, and protein synthesis in vitro. Has also been shown to inhibit the replication of mammalian viruses. The protein may provide a means of cellular suicide upon invasion by a virus. This is Antiviral protein alpha from Phytolacca americana (American pokeweed).